Here is a 118-residue protein sequence, read N- to C-terminus: MPEEESIDIKFRLYDGSDIGPFRYSAASTVDFLKQRVVSDWPKGKTVVPKGINEVKLISSGKILENNKTVGQCKTPFGDIAGGVIVMHVVVQPSLAKSKTEKKVDKAPKAVICTCTIL.

The Ubiquitin-like domain occupies 7 to 73 (IDIKFRLYDG…LENNKTVGQC (67 aa)). A lipid anchor (S-palmitoyl cysteine) is attached at cysteine 113. Cysteine 115 is modified (cysteine methyl ester). Residue cysteine 115 is the site of S-geranylgeranyl cysteine attachment. A propeptide spans 116–118 (TIL) (removed in mature form).

Ubiquitous, but three fold higher expression in senescing leaves.

It is found in the cell membrane. Functionally, may serve as docking site to facilitate the association of other proteins to the plasma membrane. The chain is Membrane-anchored ubiquitin-fold protein 3 (MUB3) from Arabidopsis thaliana (Mouse-ear cress).